The chain runs to 467 residues: Putative ankyrin repeat protein R911 (467 aa).

ANK repeat units lie at residues 38 to 70 (IKTD…PIIV), 79 to 108 (TLNK…DIRA), 109 to 138 (GNDY…DIRA), 140 to 168 (NDYA…NIRA), 170 to 198 (NDHA…DIRS), 199 to 228 (DNDY…NIRS), 229 to 258 (DNDY…DIKS), 260 to 288 (NDYA…NIRV), 289 to 318 (NNNY…DIIA), 320 to 348 (NNFA…DIKS), 350 to 378 (NDYA…DIRV), 379 to 408 (ENDY…DIRS), 410 to 438 (NDYA…DIKA), and 440 to 467 (DDYA…AVLS).

This Acanthamoeba polyphaga mimivirus (APMV) protein is Putative ankyrin repeat protein R911.